Consider the following 84-residue polypeptide: Large ribosomal subunit protein eL34 (84 aa).

Belongs to the eukaryotic ribosomal protein eL34 family.

This is Large ribosomal subunit protein eL34 from Pyrobaculum calidifontis (strain DSM 21063 / JCM 11548 / VA1).